Consider the following 502-residue polypeptide: Probable mRNA-splicing protein ubp10 (502 aa).

Residues 56-153 form a UBP-type; degenerate zinc finger; it reads SQNLYLDTIN…YVMRPTFTKL (98 aa). 4 residues coordinate Zn(2+): cysteine 89, cysteine 92, histidine 108, and histidine 114. One can recognise a USP domain in the interval 178 to 501; sequence VGMNNIKNND…ESFIQLWERS (324 aa).

It belongs to the peptidase C19 family.

The protein resides in the nucleus. In terms of biological role, may play a role in mRNA splicing. It is unsure if the protein really exhibits hydrolase activity. Could be a competitor of ubiquitin C-terminal hydrolases (UCHs). This Schizosaccharomyces pombe (strain 972 / ATCC 24843) (Fission yeast) protein is Probable mRNA-splicing protein ubp10 (ubp10).